Reading from the N-terminus, the 704-residue chain is DNA ligase (704 aa).

Residues 58-62 (DYEYD), 107-108 (SL), and glutamate 138 contribute to the NAD(+) site. Lysine 140 acts as the N6-AMP-lysine intermediate in catalysis. Residues arginine 161, glutamate 199, lysine 323, and lysine 347 each contribute to the NAD(+) site. Zn(2+) is bound by residues cysteine 441, cysteine 444, cysteine 459, and cysteine 464. A BRCT domain is found at 621-704 (EKKGKLAGLN…LKLIGGENTE (84 aa)).

The protein belongs to the NAD-dependent DNA ligase family. LigA subfamily. Mg(2+) is required as a cofactor. The cofactor is Mn(2+).

It carries out the reaction NAD(+) + (deoxyribonucleotide)n-3'-hydroxyl + 5'-phospho-(deoxyribonucleotide)m = (deoxyribonucleotide)n+m + AMP + beta-nicotinamide D-nucleotide.. DNA ligase that catalyzes the formation of phosphodiester linkages between 5'-phosphoryl and 3'-hydroxyl groups in double-stranded DNA using NAD as a coenzyme and as the energy source for the reaction. It is essential for DNA replication and repair of damaged DNA. The polypeptide is DNA ligase (Sulfurihydrogenibium sp. (strain YO3AOP1)).